The following is a 94-amino-acid chain: MMSPTLMILISITTMAILSGESFGAMPAQCNSEFLEELPPRLRKICVAIARIWDAREMNDFVDDREYRENLPRYDSSVKRQDVDHVFLRFGKRR.

An N-terminal signal peptide occupies residues 1-24 (MMSPTLMILISITTMAILSGESFG). Residues 25–80 (AMPAQCNSEFLEELPPRLRKICVAIARIWDAREMNDFVDDREYRENLPRYDSSVKR) constitute a propeptide that is removed on maturation. Residue Q81 is modified to Pyrrolidone carboxylic acid. A Phenylalanine amide modification is found at F90.

As to expression, expressed throughout the nervous system (at protein level).

The protein resides in the secreted. In terms of biological role, myoinhibiting neuropeptide. This is Myosuppressin from Camponotus floridanus (Florida carpenter ant).